A 162-amino-acid polypeptide reads, in one-letter code: Cyclic pyranopterin monophosphate synthase (162 aa).

Substrate-binding positions include 75 to 77 and 113 to 114; these read LCH and ME. The active site involves D128.

It belongs to the MoaC family. As to quaternary structure, homohexamer; trimer of dimers.

It catalyses the reaction (8S)-3',8-cyclo-7,8-dihydroguanosine 5'-triphosphate = cyclic pyranopterin phosphate + diphosphate. It functions in the pathway cofactor biosynthesis; molybdopterin biosynthesis. Functionally, catalyzes the conversion of (8S)-3',8-cyclo-7,8-dihydroguanosine 5'-triphosphate to cyclic pyranopterin monophosphate (cPMP). This Xanthobacter autotrophicus (strain ATCC BAA-1158 / Py2) protein is Cyclic pyranopterin monophosphate synthase.